We begin with the raw amino-acid sequence, 496 residues long: Glycerol kinase (496 aa).

Residue threonine 12 coordinates ADP. ATP is bound by residues threonine 12, threonine 13, and serine 14. Position 12 (threonine 12) interacts with sn-glycerol 3-phosphate. Arginine 16 contributes to the ADP binding site. 3 residues coordinate sn-glycerol 3-phosphate: arginine 82, glutamate 83, and tyrosine 134. Positions 82, 83, and 134 each coordinate glycerol. At histidine 230 the chain carries Phosphohistidine; by HPr. Aspartate 244 is a sn-glycerol 3-phosphate binding site. 2 residues coordinate glycerol: aspartate 244 and glutamine 245. Residues threonine 266 and glycine 309 each coordinate ADP. Threonine 266, glycine 309, glutamine 313, and glycine 410 together coordinate ATP. ADP-binding residues include glycine 410 and asparagine 414.

The protein belongs to the FGGY kinase family. As to quaternary structure, homotetramer and homodimer (in equilibrium). Post-translationally, the phosphoenolpyruvate-dependent sugar phosphotransferase system (PTS), including enzyme I, and histidine-containing protein (HPr) are required for the phosphorylation, which leads to the activation of the enzyme.

The catalysed reaction is glycerol + ATP = sn-glycerol 3-phosphate + ADP + H(+). Its pathway is polyol metabolism; glycerol degradation via glycerol kinase pathway; sn-glycerol 3-phosphate from glycerol: step 1/1. Activated by phosphorylation and inhibited by fructose 1,6-bisphosphate (FBP). Functionally, key enzyme in the regulation of glycerol uptake and metabolism. Catalyzes the phosphorylation of glycerol to yield sn-glycerol 3-phosphate. This chain is Glycerol kinase, found in Bacillus cereus (strain ATCC 14579 / DSM 31 / CCUG 7414 / JCM 2152 / NBRC 15305 / NCIMB 9373 / NCTC 2599 / NRRL B-3711).